Reading from the N-terminus, the 372-residue chain is Carbamoyl phosphate synthase small chain (372 aa).

The CPSase stretch occupies residues Met1–Pro179. L-glutamine contacts are provided by Ser45, Gly231, and Gly233. The Glutamine amidotransferase type-1 domain occupies Asp183 to Gln369. The active-site Nucleophile is the Cys258. Leu259, Gln262, Asn300, Gly302, and Phe303 together coordinate L-glutamine. Active-site residues include His342 and Glu344.

This sequence belongs to the CarA family. Composed of two chains; the small (or glutamine) chain promotes the hydrolysis of glutamine to ammonia, which is used by the large (or ammonia) chain to synthesize carbamoyl phosphate. Tetramer of heterodimers (alpha,beta)4.

It catalyses the reaction hydrogencarbonate + L-glutamine + 2 ATP + H2O = carbamoyl phosphate + L-glutamate + 2 ADP + phosphate + 2 H(+). It carries out the reaction L-glutamine + H2O = L-glutamate + NH4(+). It participates in amino-acid biosynthesis; L-arginine biosynthesis; carbamoyl phosphate from bicarbonate: step 1/1. The protein operates within pyrimidine metabolism; UMP biosynthesis via de novo pathway; (S)-dihydroorotate from bicarbonate: step 1/3. Small subunit of the glutamine-dependent carbamoyl phosphate synthetase (CPSase). CPSase catalyzes the formation of carbamoyl phosphate from the ammonia moiety of glutamine, carbonate, and phosphate donated by ATP, constituting the first step of 2 biosynthetic pathways, one leading to arginine and/or urea and the other to pyrimidine nucleotides. The small subunit (glutamine amidotransferase) binds and cleaves glutamine to supply the large subunit with the substrate ammonia. This is Carbamoyl phosphate synthase small chain from Akkermansia muciniphila (strain ATCC BAA-835 / DSM 22959 / JCM 33894 / BCRC 81048 / CCUG 64013 / CIP 107961 / Muc).